Here is a 475-residue protein sequence, read N- to C-terminus: Cytochrome c-552 (475 aa).

The N-terminal stretch at 1-29 is a signal peptide; sequence MSIKHWMSAPIAVATLFASQLLLAGSVLA. A disordered region spans residues 38 to 57; that stretch reads PRNDAFEQKHPDQYHSWKAT. H92 contacts heme c. 3 residues coordinate heme: C120, C123, and K124. Heme c contacts are provided by C158, C161, H162, C207, C210, and H211. Residues E213, Y214, K259, and Q261 each contribute to the Ca(2+) site. Y214 is a substrate binding site. H262 contacts substrate. Heme c is bound by residues H273, C280, C283, H284, H299, C312, C315, H316, and H391.

This sequence belongs to the cytochrome c-552 family. It depends on Ca(2+) as a cofactor. The cofactor is heme c.

The protein resides in the periplasm. It carries out the reaction 6 Fe(III)-[cytochrome c] + NH4(+) + 2 H2O = 6 Fe(II)-[cytochrome c] + nitrite + 8 H(+). Its pathway is nitrogen metabolism; nitrate reduction (assimilation). Functionally, catalyzes the reduction of nitrite to ammonia, consuming six electrons in the process. The sequence is that of Cytochrome c-552 from Vibrio parahaemolyticus serotype O3:K6 (strain RIMD 2210633).